Consider the following 145-residue polypeptide: Protein SprT-like (145 aa).

One can recognise a SprT-like domain in the interval 4–140 (TNYVQEVSLA…VCGNCHGKLM (137 aa)). Residue His-64 coordinates Zn(2+). The active site involves Glu-65. Residue His-68 coordinates Zn(2+).

The protein belongs to the SprT family. Zn(2+) is required as a cofactor.

The protein resides in the cytoplasm. This Streptococcus pyogenes serotype M1 protein is Protein SprT-like.